The following is a 414-amino-acid chain: COUP transcription factor 2 (414 aa).

The disordered stretch occupies residues 1-72 (MAMVVSTWRD…PGGPGSDKQQ (72 aa)). Residues 27 to 37 (PPVPGPPPGAP) are compositionally biased toward pro residues. A compositionally biased stretch (low complexity) spans 38-54 (HTPQTPGQGGPASTPAQ). At Thr51 the chain carries Phosphothreonine. Residues 76-151 (HIECVVCGDK…VGMRREAVQR (76 aa)) constitute a DNA-binding region (nuclear receptor). NR C4-type zinc fingers lie at residues 79 to 99 (CVVC…CEGC) and 115 to 139 (CRAN…LKKC). Residues 117-414 (ANRNCPIDQH…SFNWPYMAIQ (298 aa)) form an interaction with ZFPM2 region. The 227-residue stretch at 177-403 (YLSGYISLLL…TLIRDMLLSG (227 aa)) folds into the NR LBD domain. The segment at 337–414 (LQEKSQCALE…SFNWPYMAIQ (78 aa)) is important for dimerization.

This sequence belongs to the nuclear hormone receptor family. NR2 subfamily. In terms of assembly, interacts with SQSTM1. Binds DNA as a dimer; homodimer or heterodimer with NR2F6. Interacts with NCOA1, NCOA2, NCOA3 and PPARGC1A. Interacts with ZFPM2.

It localises to the nucleus. Ligand-activated transcription factor. Activated by high concentrations of 9-cis-retinoic acid and all-trans-retinoic acid, but not by dexamethasone, cortisol or progesterone (in vitro). Regulation of the apolipoprotein A-I gene transcription. Binds to DNA site A. May be required to establish ovary identity during early gonad development. The sequence is that of COUP transcription factor 2 (Nr2f2) from Rattus norvegicus (Rat).